The following is a 412-amino-acid chain: Multifunctional CCA protein (412 aa).

Positions 8 and 11 each coordinate ATP. CTP contacts are provided by glycine 8 and arginine 11. 2 residues coordinate Mg(2+): glutamate 21 and aspartate 23. Residues arginine 91, arginine 137, and arginine 140 each contribute to the ATP site. CTP is bound by residues arginine 91, arginine 137, and arginine 140. In terms of domain architecture, HD spans 228–329; that stretch reads TGIHTLMTLA…LKLFNAIDVW (102 aa).

The protein belongs to the tRNA nucleotidyltransferase/poly(A) polymerase family. Bacterial CCA-adding enzyme type 1 subfamily. As to quaternary structure, monomer. Can also form homodimers and oligomers. Requires Mg(2+) as cofactor. The cofactor is Ni(2+).

It carries out the reaction a tRNA precursor + 2 CTP + ATP = a tRNA with a 3' CCA end + 3 diphosphate. It catalyses the reaction a tRNA with a 3' CCA end + 2 CTP + ATP = a tRNA with a 3' CCACCA end + 3 diphosphate. Functionally, catalyzes the addition and repair of the essential 3'-terminal CCA sequence in tRNAs without using a nucleic acid template. Adds these three nucleotides in the order of C, C, and A to the tRNA nucleotide-73, using CTP and ATP as substrates and producing inorganic pyrophosphate. tRNA 3'-terminal CCA addition is required both for tRNA processing and repair. Also involved in tRNA surveillance by mediating tandem CCA addition to generate a CCACCA at the 3' terminus of unstable tRNAs. While stable tRNAs receive only 3'-terminal CCA, unstable tRNAs are marked with CCACCA and rapidly degraded. The chain is Multifunctional CCA protein from Yersinia pestis.